Reading from the N-terminus, the 101-residue chain is uncharacterized protein (101 aa).

2 helical membrane-spanning segments follow: residues 3-23 (IVYE…LFLF) and 39-59 (AFLS…LIFF).

It localises to the membrane. This is an uncharacterized protein from Saccharomyces cerevisiae (strain ATCC 204508 / S288c) (Baker's yeast).